The chain runs to 158 residues: Transcription elongation factor GreA (158 aa).

This sequence belongs to the GreA/GreB family.

In terms of biological role, necessary for efficient RNA polymerase transcription elongation past template-encoded arresting sites. The arresting sites in DNA have the property of trapping a certain fraction of elongating RNA polymerases that pass through, resulting in locked ternary complexes. Cleavage of the nascent transcript by cleavage factors such as GreA or GreB allows the resumption of elongation from the new 3'terminus. GreA releases sequences of 2 to 3 nucleotides. This Pelagibacter ubique (strain HTCC1062) protein is Transcription elongation factor GreA.